The following is a 385-amino-acid chain: Glycerol-3-phosphate dehydrogenase [NAD(+)] 1 (385 aa).

Residues 29–34 (GSGNWG), phenylalanine 121, lysine 144, and alanine 177 each bind NAD(+). Lysine 144 contributes to the substrate binding site. The active-site Proton acceptor is lysine 232. 2 residues coordinate NAD(+): arginine 296 and glutamine 325. 296 to 297 (RN) is a binding site for substrate. Serine 376 carries the phosphoserine modification. Threonine 382 carries the phosphothreonine modification.

This sequence belongs to the NAD-dependent glycerol-3-phosphate dehydrogenase family.

It localises to the cytoplasm. It catalyses the reaction sn-glycerol 3-phosphate + NAD(+) = dihydroxyacetone phosphate + NADH + H(+). The chain is Glycerol-3-phosphate dehydrogenase [NAD(+)] 1 (gpd1) from Schizosaccharomyces pombe (strain 972 / ATCC 24843) (Fission yeast).